The following is a 345-amino-acid chain: Eukaryotic translation initiation factor 3 subunit F (345 aa).

The 137-residue stretch at 30 to 166 folds into the MPN domain; the sequence is VVIHPQALFS…TRAYISAPVG (137 aa). Residues 308–345 form a disordered region; sequence GGESGNAESGQRGGQRGGKGGRGGQQRTQDRSGEEARA. Residues 318–331 are compositionally biased toward gly residues; the sequence is QRGGQRGGKGGRGG. The span at 335-345 shows a compositional bias: basic and acidic residues; it reads TQDRSGEEARA.

It belongs to the eIF-3 subunit F family. As to quaternary structure, component of the eukaryotic translation initiation factor 3 (eIF-3) complex.

The protein resides in the cytoplasm. In terms of biological role, component of the eukaryotic translation initiation factor 3 (eIF-3) complex, which is involved in protein synthesis of a specialized repertoire of mRNAs and, together with other initiation factors, stimulates binding of mRNA and methionyl-tRNAi to the 40S ribosome. The eIF-3 complex specifically targets and initiates translation of a subset of mRNAs involved in cell proliferation. The protein is Eukaryotic translation initiation factor 3 subunit F of Aspergillus oryzae (strain ATCC 42149 / RIB 40) (Yellow koji mold).